A 209-amino-acid polypeptide reads, in one-letter code: Eukaryotic translation initiation factor 4E (209 aa).

Residues 51 to 52 (WH), 97 to 98 (WE), and 153 to 158 (RKQAYR) each bind mRNA.

The protein belongs to the eukaryotic initiation factor 4E family. As to quaternary structure, eIF4F is a multi-subunit complex, the composition of which varies with external and internal environmental conditions. It is composed of at least eIF4A, eIF4E and eIF4G. eIF4E is also known to interact with other partners.

Recognizes and binds the 7-methylguanosine-containing mRNA cap during an early step in the initiation of protein synthesis and facilitates ribosome binding by inducing the unwinding of the mRNAs secondary structures. This chain is Eukaryotic translation initiation factor 4E (TIF45), found in Candida albicans (strain SC5314 / ATCC MYA-2876) (Yeast).